Consider the following 399-residue polypeptide: Octopine dehydrogenase (399 aa).

Residues 10-13 and 35-38 contribute to the NADH site; these read GGNG and FADE. The pyruvate site is built by Gln-118 and Thr-143. A substrate-binding site is contributed by Gln-118. NAD(+) is bound at residue Cys-148. Met-206 serves as a coordination point for L-arginine. His-212 contributes to the pyruvate binding site. The active site involves His-212. Arg-324 contacts NAD(+).

This sequence belongs to the lysopine/nopaline/octopine/opine/vitopine dehydrogenases family.

It catalyses the reaction D-octopine + NAD(+) + H2O = L-arginine + pyruvate + NADH + H(+). Its activity is regulated as follows. Agmatine acts as a competitive inhibitor of the condensation reaction where the L-arginine and agmatine substrates compete for the same site. In terms of biological role, catalyzes the reverse reaction of octopine dehydrogenation. Acts on L-arginine in preference to other substrates such as canavanine, cysteine, L-alanine, ornithine or norvaline, owing to the presence of the positively charged guanidium group. The chain is Octopine dehydrogenase from Pecten maximus (King scallop).